Here is a 2204-residue protein sequence, read N- to C-terminus: Non-reducing polyketide synthase CTB1 (2204 aa).

Residues 11–250 (AFGDQTYDCS…TRLPITAPYH (240 aa)) are N-terminal acylcarrier protein transacylase domain (SAT). A Ketosynthase family 3 (KS3) domain is found at 382–815 (KSPIAILAAS…GGNTCLVLED (434 aa)). Residues cysteine 554, histidine 689, and histidine 734 each act as for beta-ketoacyl synthase activity in the active site. The segment at 923–1224 (AFTGQGSAFE…QTFASINKDK (302 aa)) is malonyl-CoA:ACP transacylase (MAT) domain. The tract at residues 1299–1619 (SSSIHKVITN…VPKRLMHYIV (321 aa)) is product template (PT) domain. The tract at residues 1303 to 1439 (HKVITNTITA…CKIRFGSLEK (137 aa)) is N-terminal hotdog fold. A PKS/mFAS DH domain is found at 1303–1616 (HKVITNTITA…LQGVPKRLMH (314 aa)). The active-site Proton acceptor; for dehydratase activity is histidine 1336. The tract at residues 1468–1616 (TYRFSKGMIY…LQGVPKRLMH (149 aa)) is C-terminal hotdog fold. Catalysis depends on aspartate 1528, which acts as the Proton donor; for dehydratase activity. Positions 1625 to 1674 (KASGPPTEKKGSSPPVEKKASAPVAPTRPAIQRKNASIPPPATQVTPQNK) are disordered. Basic and acidic residues predominate over residues 1631–1644 (TEKKGSSPPVEKKA). Carrier domains lie at 1679–1756 (PSVS…TRLS) and 1783–1865 (DPSP…SGST). 2 positions are modified to O-(pantetheine 4'-phosphoryl)serine: serine 1716 and serine 1824. Residues 1864–1875 (STESFDSTTTKP) are compositionally biased toward polar residues. Positions 1864–1931 (STESFDSTTT…PPKGRIPPAW (68 aa)) are disordered. Residues 1880-1895 (ATPPLTDSSASSPPSS) are compositionally biased toward low complexity. The segment at 1945 to 2195 (ILFLFPDGAG…SGAQMLVEHM (251 aa)) is thioesterase (TE) domain.

Requires pantetheine 4'-phosphate as cofactor.

It carries out the reaction 6 malonyl-CoA + acetyl-CoA + 6 H(+) = nor-toralactone + 6 CO2 + 7 CoA + 2 H2O. The protein operates within mycotoxin biosynthesis. Polyketide synthase; part of the gene cluster that mediates the biosynthesis of cercosporin, a light-activated, non-host-selective toxin. The perylenequinone chromophore of cercosporin absorbs light energy to attain an electronically-activated triplet state and produces active oxygen species such as the hydroxyl radical, superoxide, hydrogen peroxide or singlet oxygen upon reaction with oxygen molecules. These reactive oxygen species cause damage to various cellular components including lipids, proteins and nucleic acids. The first step of cercosporin biosynthesis is performed by the polyketide synthase CTB1 which catalyzes the formation of nor-toralactone. The starter unit acyltransferase (SAT) domain of CTB1 initiates polyketide extension by the selective utilization of acetyl-CoA, which is elongated to the heptaketide in the beta-ketoacyl synthase (KS) domain by successive condensations with six malonyl units introduced by the malonyl acyltransferase (MAT) domain. The product template (PT) domain catalyzes C4-C9 and C2-C11 aldol cyclizations and dehydrations to a trihydroxynaphthalene, which is thought to be delivered to the thioesterase (TE) domain for product release. The bifunctional enzyme CTB3 then methylates nor-toralactone to toralactone before conducting an unusual oxidative aromatic ring opening. The O-methyltransferase CTB2 further methylates the nascent OH-6 of the CBT3 product, blocking further oxidation at this site before the reductase CTB6 reduces the 2-oxopropyl ketone at position C7, giving naphthalene. The FAD-dependent monooxygenase CTB5 in concert with the multicopper oxidase CTB12 are responsible for homodimerization of naphthalene with CTB7 installing the dioxepine moiety, finally producing cercosporin. The fasciclin domain-containing protein CTB11 might act with CTB5 and CTB12 whereas the roles of CTB9 and CTB10 have still to be elucidated. The sequence is that of Non-reducing polyketide synthase CTB1 from Cercospora beticola (Sugarbeet leaf spot fungus).